A 433-amino-acid polypeptide reads, in one-letter code: MTRRAEFEMGLFVILQSMFLISLCSSQKPEEFLPEISPDTSPQPFLPFIAPSPMVPYINSTMPKLSGLCSLNFSASESLIQTTSHNCWTVFAPLLANVMCCPQLDATLTIILGKASKETGLLALNRTQSKHCLSDLEQILVGKGASGQLNKICSIHSSNLTSSSCPVINVDEFESTVDTAKLLLACEKIDPVKECCEEACQNAILDAATNISLKASETLTDNSDRINDCKNVVNRWLATKLDPSRVKETLRGLANCKINRVCPLVFPHMKHIGGNCSNELSNQTGCCRAMESYVSHLQKQTLITNLQALDCATSLGTKLQKLNITKNIFSVCHISLKDFSLQVGNQESGCLLPSLPSDAIFDKDTGISFTCDLNDNIPAPWPSSSLSSASTCKKPVRIPALPAAASSQPRLHDEGVTRLVIFVLSMLLVMLLS.

The N-terminal stretch at 1 to 26 (MTRRAEFEMGLFVILQSMFLISLCSS) is a signal peptide. N-linked (GlcNAc...) asparagine glycans are attached at residues asparagine 59, asparagine 72, asparagine 125, asparagine 159, asparagine 210, asparagine 275, asparagine 282, and asparagine 323. Alanine 405 carries the GPI-anchor amidated alanine lipid modification. A propeptide spans 406–433 (SSQPRLHDEGVTRLVIFVLSMLLVMLLS) (removed in mature form).

The protein resides in the cell membrane. This is an uncharacterized protein from Arabidopsis thaliana (Mouse-ear cress).